The chain runs to 247 residues: ATP synthase subunit a, chloroplastic (247 aa).

5 helical membrane-spanning segments follow: residues 38-58 (QVLI…AIAV), 95-115 (VPFI…GALL), 134-154 (INTT…AGLT), 199-219 (LVVV…VMFL), and 220-240 (GLFT…AYIG).

It belongs to the ATPase A chain family. As to quaternary structure, F-type ATPases have 2 components, CF(1) - the catalytic core - and CF(0) - the membrane proton channel. CF(1) has five subunits: alpha(3), beta(3), gamma(1), delta(1), epsilon(1). CF(0) has four main subunits: a, b, b' and c.

Its subcellular location is the plastid. The protein localises to the chloroplast thylakoid membrane. Its function is as follows. Key component of the proton channel; it plays a direct role in the translocation of protons across the membrane. This is ATP synthase subunit a, chloroplastic from Ceratophyllum demersum (Rigid hornwort).